The following is a 501-amino-acid chain: Aerobic glycerol-3-phosphate dehydrogenase (501 aa).

Asp-5–Glu-33 is a binding site for FAD.

It belongs to the FAD-dependent glycerol-3-phosphate dehydrogenase family. The cofactor is FAD.

The protein resides in the cytoplasm. The catalysed reaction is a quinone + sn-glycerol 3-phosphate = dihydroxyacetone phosphate + a quinol. It participates in polyol metabolism; glycerol degradation via glycerol kinase pathway; glycerone phosphate from sn-glycerol 3-phosphate (aerobic route): step 1/1. In terms of biological role, conversion of glycerol 3-phosphate to dihydroxyacetone. Uses molecular oxygen or nitrate as electron acceptor. This chain is Aerobic glycerol-3-phosphate dehydrogenase (glpD), found in Escherichia coli (strain K12).